We begin with the raw amino-acid sequence, 123 residues long: Probable histone H2B 3 (123 aa).

The segment at 1 to 31 (MAPPKPSAKGAKKAAKTVSKPKDGKKRKHAR) is disordered. O-linked (GlcNAc) serine glycosylation is present at Ser110. Lys118 is covalently cross-linked (Glycyl lysine isopeptide (Lys-Gly) (interchain with G-Cter in ubiquitin)).

Belongs to the histone H2B family. The nucleosome is a histone octamer containing two molecules each of H2A, H2B, H3 and H4 assembled in one H3-H4 heterotetramer and two H2A-H2B heterodimers. The octamer wraps approximately 147 bp of DNA. Post-translationally, monoubiquitination of Lys-118 gives a specific tag for epigenetic transcriptional activation and is also prerequisite for histone H3 'Lys-4' and 'Lys-79' methylation. In terms of processing, glcNAcylation at Ser-110 promotes monoubiquitination of Lys-118. It fluctuates in response to extracellular glucose, and associates with transcribed genes.

It localises to the nucleus. Its subcellular location is the chromosome. Its function is as follows. Core component of nucleosome. Nucleosomes wrap and compact DNA into chromatin, limiting DNA accessibility to the cellular machineries which require DNA as a template. Histones thereby play a central role in transcription regulation, DNA repair, DNA replication and chromosomal stability. DNA accessibility is regulated via a complex set of post-translational modifications of histones, also called histone code, and nucleosome remodeling. The polypeptide is Probable histone H2B 3 (his-41) (Caenorhabditis elegans).